A 230-amino-acid polypeptide reads, in one-letter code: Large ribosomal subunit protein uL1 (230 aa).

The protein belongs to the universal ribosomal protein uL1 family. Part of the 50S ribosomal subunit.

Its function is as follows. Binds directly to 23S rRNA. The L1 stalk is quite mobile in the ribosome, and is involved in E site tRNA release. In terms of biological role, protein L1 is also a translational repressor protein, it controls the translation of the L11 operon by binding to its mRNA. This Acidiphilium cryptum (strain JF-5) protein is Large ribosomal subunit protein uL1.